We begin with the raw amino-acid sequence, 395 residues long: Elongation factor Tu (395 aa).

Residues 10-204 (LPHVNIGTIG…AVDEYIPTPQ (195 aa)) enclose the tr-type G domain. The G1 stretch occupies residues 19-26 (GHVDHGKT). 19–26 (GHVDHGKT) contacts GTP. Residue T26 coordinates Mg(2+). The interval 60–64 (GITIN) is G2. A G3 region spans residues 81-84 (DCPG). Residues 81–85 (DCPGH) and 136–139 (NKCD) contribute to the GTP site. Residues 136–139 (NKCD) form a G4 region. The G5 stretch occupies residues 174–176 (SAL).

The protein belongs to the TRAFAC class translation factor GTPase superfamily. Classic translation factor GTPase family. EF-Tu/EF-1A subfamily. As to quaternary structure, monomer.

The protein localises to the cytoplasm. It carries out the reaction GTP + H2O = GDP + phosphate + H(+). In terms of biological role, GTP hydrolase that promotes the GTP-dependent binding of aminoacyl-tRNA to the A-site of ribosomes during protein biosynthesis. In Mycoplasma capricolum subsp. capricolum (strain California kid / ATCC 27343 / NCTC 10154), this protein is Elongation factor Tu.